The primary structure comprises 622 residues: Cilia- and flagella-associated protein 206 (622 aa).

The segment at 568–593 is disordered; the sequence is NTSQVYPLKEASTQSKREGSSRVPRP.

It belongs to the CFAP206 family. Expressed in the sperm, oviduct, lung, nasal cavity, brain ependyma and choroid plexus.

The protein resides in the cytoplasm. It is found in the cytoskeleton. It localises to the cilium axoneme. The protein localises to the cilium basal body. Essential for sperm motility and is involved in the regulation of the beating frequency of motile cilia on the epithelial cells of the respiratory tract. Required for the establishment of radial spokes in sperm flagella. The protein is Cilia- and flagella-associated protein 206 of Mus musculus (Mouse).